The chain runs to 652 residues: Neuroendocrine convertase 2 (652 aa).

The signal sequence occupies residues 1-22; sequence MKNTHVDLICVFLSIFIGIGEA. A propeptide spanning residues 23 to 107 is cleaved from the precursor; the sequence is VDVYTNHFHV…QLKGYTRTKR (85 aa). A Peptidase S8 domain is found at 136–481; that stretch reads QWYLKNTGQA…FGVLDAAEMV (346 aa). A glycan (N-linked (GlcNAc...) asparagine) is linked at asparagine 167. Catalysis depends on charge relay system residues aspartate 174 and histidine 215. Intrachain disulfides connect cysteine 232/cysteine 382 and cysteine 324/cysteine 354. A glycan (N-linked (GlcNAc...) asparagine) is linked at asparagine 290. Catalysis depends on serine 390, which acts as the Charge relay system. N-linked (GlcNAc...) asparagine glycosylation is present at asparagine 451. One can recognise a P/Homo B domain in the interval 489 to 625; it reads TSPPRYHCTA…ELMLHGTREA (137 aa). A disulfide bridge connects residues cysteine 496 and cysteine 522. The segment at 501–652 is required for ubiquitination-mediated degradation; sequence IDTPHEIPAD…TVQKAHKRSH (152 aa). Asparagine 542 is a glycosylation site (N-linked (GlcNAc...) asparagine).

The protein belongs to the peptidase S8 family. Furin subfamily. Interacts (via C-terminus) with F-box protein fsn-1 (via SPRY domain); the interaction results in egl-3 proteasomal degradation. In terms of processing, ubiquitinated. Expressed in head and tail ganglia. Expressed in neurons including mechanosensory and motor neurons, and interneurons (at protein level). Expressed in the nerve ring, ventral nerve cord and intestine.

The protein localises to the cell projection. It localises to the axon. Its subcellular location is the cytoplasmic vesicle. It is found in the secretory vesicle lumen. The protein resides in the secreted. The enzyme catalyses Release of protein hormones and neuropeptides from their precursors, generally by hydrolysis of -Lys-Arg-|- bonds.. In terms of biological role, serine endoprotease which cleaves preproteins at paired basic amino acids. Processes FMRFamide-like (flp) and neuropeptide-like protein (nlp) neuropeptides. Probably by processing flp-1 and flp-18, modulates the neuronal excitation-inhibition balance and thus the level of activity of the locomotor circuit. Regulates sensitivity to mechanosensory stimuli. By processing neuropeptides, modulates basal acetylcholine release at the ventral cord neuromuscular junctions. Probably by processing flp neuropeptides, regulates the turning step of male mating behavior. Cleaves pro-insulin-like proteins ins-3, ins-4 and ins-6 into their mature active forms. Together with convertase kpc-1, cleaves pro-insulin-like protein ins-18. By controlling ins-4 and ins-6 processing and thus the activation of the daf-2/InsR pathway, negatively modulates synapse development and synaptic transmission at neuromuscular junctions. Similarly, by controlling ins-4 and ins-6 processing, negatively regulates dauer formation under optimal environmental conditions. Under adverse environmental conditions, may promote dauer formation by processing ins-18, a daf-2/InsR antagonist. May cleave dense-core vesicle membrane protein ida-1. Involved in egg-laying, fat storage and locomotion. The polypeptide is Neuroendocrine convertase 2 (Caenorhabditis elegans).